A 129-amino-acid polypeptide reads, in one-letter code: Fluoride-specific ion channel FluC 2 (129 aa).

The next 4 membrane-spanning stretches (helical) occupy residues 4-24 (LDVM…WWIG), 39-59 (TFLI…LFGV), 65-85 (YGTM…TTFS), and 104-124 (VFYL…GAML). Na(+) is bound by residues Gly79 and Thr82.

The protein belongs to the fluoride channel Fluc/FEX (TC 1.A.43) family.

Its subcellular location is the cell inner membrane. The catalysed reaction is fluoride(in) = fluoride(out). With respect to regulation, na(+) is not transported, but it plays an essential structural role and its presence is essential for fluoride channel function. In terms of biological role, fluoride-specific ion channel. Important for reducing fluoride concentration in the cell, thus reducing its toxicity. This chain is Fluoride-specific ion channel FluC 2, found in Brucella abortus biovar 1 (strain 9-941).